The primary structure comprises 288 residues: tRNA pseudouridine synthase A (288 aa).

Asp-58 (nucleophile) is an active-site residue. Position 124 (Tyr-124) interacts with substrate.

It belongs to the tRNA pseudouridine synthase TruA family. In terms of assembly, homodimer.

The enzyme catalyses uridine(38/39/40) in tRNA = pseudouridine(38/39/40) in tRNA. In terms of biological role, formation of pseudouridine at positions 38, 39 and 40 in the anticodon stem and loop of transfer RNAs. The chain is tRNA pseudouridine synthase A from Corynebacterium diphtheriae (strain ATCC 700971 / NCTC 13129 / Biotype gravis).